A 1150-amino-acid chain; its full sequence is BAI1-associated protein 3 (1150 aa).

The disordered stretch occupies residues 22–44; the sequence is RRKTEQEPEVTNSQEPPTGAWKP. The C2 1 domain maps to 139–298; that stretch reads SSEEHMEAIM…VKSARANGTA (160 aa). Residues D174 and D180 each contribute to the Ca(2+) site. The disordered stretch occupies residues 193-214; sequence APQEPSGQKEQRFGFRKGSKRS. Ca(2+)-binding residues include D258 and D260. Positions 626-747 constitute an MHD1 domain; the sequence is FELYLTLADT…EASLFYTELL (122 aa). In terms of domain architecture, MHD2 spans 851–959; the sequence is DEAVAPLLKY…CSTRECIEQF (109 aa). One can recognise a C2 2 domain in the interval 973-1099; the sequence is RFGRLTVRCH…GIARPHVGGG (127 aa). The Ca(2+) site is built by L1003, D1004, D1010, D1068, D1070, S1073, and D1076.

Belongs to the unc-13 family. In terms of assembly, interacts with ADGRB1, this interaction is direct. Interacts with endosomal SNARE proteins VAMP3, VAMP4, STX6 and STX16; this interaction is increased in the presence of calcium. It depends on Ca(2+) as a cofactor. As to expression, prominently expressed in brain structures including hypothalamus, amygdala, stria terminalis and periaqueductal gray (at protein level). Expressed in nonneuronal tissues, including placenta, lung, pancreas, spleen, and testes. Within placenta, expression is restricted to the syncytiotrophoblasts.

The protein resides in the cytoplasm. The protein localises to the cytosol. It is found in the recycling endosome membrane. It localises to the late endosome membrane. Its subcellular location is the golgi apparatus. The protein resides in the trans-Golgi network membrane. The protein localises to the cell membrane. In terms of biological role, functions in endosome to Golgi retrograde transport. In response to calcium influx, may interact with SNARE fusion receptors and membrane phospholipids to mediate endosome fusion with the trans-Golgi network. By promoting the recycling of secretory vesicle transmembrane proteins, it indirectly controls dense-core secretory vesicle biogenesis, maturation and their ability to mediate the constitutive and regulated secretion of neurotransmitters and hormones. May regulate behavior and food intake by controlling calcium-stimulated exocytosis of neurotransmitters including NPY and serotonin and hormones like insulin. Proposed to play a role in hypothalamic neuronal firing by modulating gamma-aminobutyric acid (GABA)ergic inhibitory neurotransmission. In Mus musculus (Mouse), this protein is BAI1-associated protein 3.